The sequence spans 696 residues: Polyribonucleotide nucleotidyltransferase (696 aa).

Positions 489 and 495 each coordinate Mg(2+). Residues 556–615 (PQYVTMKINPEKIRDVIGKGGVVIREITEATNCAIDISDDGTIKIAAHTTEEGEAAKRRI) enclose the KH domain. An S1 motif domain is found at 625–693 (GKVYEGTVVK…RQGRVRLSMK (69 aa)).

The protein belongs to the polyribonucleotide nucleotidyltransferase family. As to quaternary structure, component of the RNA degradosome, which is a multiprotein complex involved in RNA processing and mRNA degradation. Mg(2+) serves as cofactor.

The protein localises to the cytoplasm. The catalysed reaction is RNA(n+1) + phosphate = RNA(n) + a ribonucleoside 5'-diphosphate. Involved in mRNA degradation. Catalyzes the phosphorolysis of single-stranded polyribonucleotides processively in the 3'- to 5'-direction. In Coxiella burnetii (strain CbuG_Q212) (Coxiella burnetii (strain Q212)), this protein is Polyribonucleotide nucleotidyltransferase.